Here is a 1108-residue protein sequence, read N- to C-terminus: MASNQIYTPPAFTLPDLVEIQRASFRWFLEEGLIEELESFSPITDYTGKIELHFLAKDYRLKEPKYSVDEAKRRDATYSMQMYVPTRLINKENGNIIDQDVFIGDLPLMTDRGTFIINGAERVIVNQIVRSPGVYYKSETDKNGRRTYNASLIPNRGAWLKFETDKNDLLWVRIDKTRKLSAHVLLKALGLTDSEILERLRHPEYYQKTVEKEGKFSEEEALIELYKKLRPGEPPTVSGGQQLLESRFFDPKRYDLGRVGRYKLNRKLQLNIPDSVRILTPEDILAAIDYLINLEFDLGTIDDIDHLGNRRVRSVGELLQNQVRVGLNRLERIIRERMTVSDTDSLTPTSLVNPKPLVAAIKEFFGSSQLSQFMDQTNPLAELTHKRRLSALGPGGLTRERAGFAVRDIHPSHYGRICPIETPEGPNAGLIGSLATHARVNEYGFIETPFYPVKDGRVLKDQPPIYMTADEEDDKRVAPGDVPTDENGYILGDVVPVRYRQDFTTTTPDQVDYVAVSPVQIISVATSLIPFLEHDDANRALMGSNMQRQAVPLLRPQRPLVGTGLEAQAARDSGMVILSQTNGVVSYVDANQIRVKTDNGPEITYTLQKYQRSNQDTCLNQRPIVFVGDRVQAGQVIADGSATEGGELALGQNILVAYMPWEGYNYEDAILISERLVQEDVYTSIHIEKYEIEARQTKLGPEEITREVPNVSEEALRQLDENGIIRIGAFVEAGDILVGKVTPKGESDQPPEEKLLRAIFGEKARDVRDNSLRVPNGEKGRVVDVRVFTREQGDELPPGANMVVRVYVAQKRKIQVGDKMAGRHGNKGIISRILPVEDMPFLPDGRPVDIVLNPLGVPSRMNVGQVYECLLGWAGACLGRRFKITPFDEMHGKEKSRETVHAKLQEARDVTGQDWVFNPENPGKMVVYDGRTGEPFDRPVTVGMAYMLKLVHLVDDKIHARSTGPYSLVTQQPLGGKAQQGGQRFGEMEVWALEAYGAAYILQELLTVKSDDMQGRNEALNAIVKGQSIPRPGTPESFKVLMRELQSLCLDISVRKASIPSFDDDGEMKPDPEVDLMVDVSPRRTPARPTIDYSALDDTDDKEGATTF.

The tract at residues 1081–1108 is disordered; that stretch reads SPRRTPARPTIDYSALDDTDDKEGATTF.

This sequence belongs to the RNA polymerase beta chain family. In cyanobacteria the RNAP catalytic core is composed of 2 alpha, 1 beta, 1 beta', 1 gamma and 1 omega subunit. When a sigma factor is associated with the core the holoenzyme is formed, which can initiate transcription.

It catalyses the reaction RNA(n) + a ribonucleoside 5'-triphosphate = RNA(n+1) + diphosphate. DNA-dependent RNA polymerase catalyzes the transcription of DNA into RNA using the four ribonucleoside triphosphates as substrates. This chain is DNA-directed RNA polymerase subunit beta, found in Thermosynechococcus vestitus (strain NIES-2133 / IAM M-273 / BP-1).